Consider the following 245-residue polypeptide: Acetylglutamate kinase (245 aa).

Residues 41–42 (GG), arginine 63, and asparagine 156 each bind substrate.

Belongs to the acetylglutamate kinase family. ArgB subfamily.

The protein resides in the cytoplasm. The catalysed reaction is N-acetyl-L-glutamate + ATP = N-acetyl-L-glutamyl 5-phosphate + ADP. It participates in amino-acid biosynthesis; L-arginine biosynthesis; N(2)-acetyl-L-ornithine from L-glutamate: step 2/4. In terms of biological role, catalyzes the ATP-dependent phosphorylation of N-acetyl-L-glutamate. This is Acetylglutamate kinase from Streptococcus mutans serotype c (strain ATCC 700610 / UA159).